The chain runs to 62 residues: Large ribosomal subunit protein bL33 (62 aa).

It belongs to the bacterial ribosomal protein bL33 family.

The sequence is that of Large ribosomal subunit protein bL33 from Bacteroides fragilis (strain ATCC 25285 / DSM 2151 / CCUG 4856 / JCM 11019 / LMG 10263 / NCTC 9343 / Onslow / VPI 2553 / EN-2).